The chain runs to 186 residues: Acireductone dioxygenase (186 aa).

Residues His103, His105, Glu109, and His147 each coordinate Fe(2+). The Ni(2+) site is built by His103, His105, Glu109, and His147.

Belongs to the acireductone dioxygenase (ARD) family. As to quaternary structure, monomer. Fe(2+) is required as a cofactor. The cofactor is Ni(2+).

The catalysed reaction is 1,2-dihydroxy-5-(methylsulfanyl)pent-1-en-3-one + O2 = 3-(methylsulfanyl)propanoate + CO + formate + 2 H(+). It carries out the reaction 1,2-dihydroxy-5-(methylsulfanyl)pent-1-en-3-one + O2 = 4-methylsulfanyl-2-oxobutanoate + formate + 2 H(+). Its pathway is amino-acid biosynthesis; L-methionine biosynthesis via salvage pathway; L-methionine from S-methyl-5-thio-alpha-D-ribose 1-phosphate: step 5/6. Functionally, catalyzes 2 different reactions between oxygen and the acireductone 1,2-dihydroxy-3-keto-5-methylthiopentene (DHK-MTPene) depending upon the metal bound in the active site. Fe-containing acireductone dioxygenase (Fe-ARD) produces formate and 2-keto-4-methylthiobutyrate (KMTB), the alpha-ketoacid precursor of methionine in the methionine recycle pathway. Ni-containing acireductone dioxygenase (Ni-ARD) produces methylthiopropionate, carbon monoxide and formate, and does not lie on the methionine recycle pathway. The protein is Acireductone dioxygenase of Synechococcus sp. (strain CC9605).